The sequence spans 364 residues: Peptide chain release factor 2 (364 aa).

Position 252 is an N5-methylglutamine (glutamine 252).

The protein belongs to the prokaryotic/mitochondrial release factor family. In terms of processing, methylated by PrmC. Methylation increases the termination efficiency of RF2.

The protein resides in the cytoplasm. Its function is as follows. Peptide chain release factor 2 directs the termination of translation in response to the peptide chain termination codons UGA and UAA. The sequence is that of Peptide chain release factor 2 from Clostridium perfringens (strain SM101 / Type A).